The following is a 760-amino-acid chain: Acetyl-CoA decarbonylase/synthase complex subunit alpha 1 (760 aa).

Positions 56, 59, 60, 62, 67, and 77 each coordinate [4Fe-4S] cluster. A CO-binding site is contributed by H100. 3 residues coordinate [Ni-4Fe-4S] cluster: H231, C259, and C298. 2 consecutive 4Fe-4S ferredoxin-type domains span residues 381 to 410 (KKLQ…VEAM) and 418 to 450 (FEGL…MIED). The [4Fe-4S] cluster site is built by C390, C393, C396, C400, C428, C431, C434, and C438. [Ni-4Fe-4S] cluster-binding residues include C496, C525, and C560.

It belongs to the Ni-containing carbon monoxide dehydrogenase family. In terms of assembly, heterotetramer of two alpha and two epsilon subunits. The ACDS complex is made up of alpha, epsilon, beta, gamma and delta subunits with a probable stoichiometry of (alpha(2)epsilon(2))(4)-beta(8)-(gamma(1)delta(1))(8). The cofactor is [4Fe-4S] cluster. [Ni-4Fe-4S] cluster is required as a cofactor.

It carries out the reaction CO + 2 oxidized [2Fe-2S]-[ferredoxin] + H2O = 2 reduced [2Fe-2S]-[ferredoxin] + CO2 + 2 H(+). Its function is as follows. Part of the ACDS complex that catalyzes the reversible cleavage of acetyl-CoA, allowing autotrophic growth from CO(2). The alpha-epsilon subcomponent functions as a carbon monoxide dehydrogenase. The sequence is that of Acetyl-CoA decarbonylase/synthase complex subunit alpha 1 from Methanopyrus kandleri (strain AV19 / DSM 6324 / JCM 9639 / NBRC 100938).